The sequence spans 519 residues: 2-isopropylmalate synthase (519 aa).

In terms of domain architecture, Pyruvate carboxyltransferase spans 12–274 (IRIFDTTLRD…DTSIHTSRIV (263 aa)). Asp-21, His-209, His-211, and Asn-245 together coordinate Mn(2+). The segment at 396–519 (RLASMTISDV…MQNKQNTALA (124 aa)) is regulatory domain.

It belongs to the alpha-IPM synthase/homocitrate synthase family. LeuA type 1 subfamily. In terms of assembly, homodimer. Requires Mn(2+) as cofactor.

The protein resides in the cytoplasm. It catalyses the reaction 3-methyl-2-oxobutanoate + acetyl-CoA + H2O = (2S)-2-isopropylmalate + CoA + H(+). It participates in amino-acid biosynthesis; L-leucine biosynthesis; L-leucine from 3-methyl-2-oxobutanoate: step 1/4. Functionally, catalyzes the condensation of the acetyl group of acetyl-CoA with 3-methyl-2-oxobutanoate (2-ketoisovalerate) to form 3-carboxy-3-hydroxy-4-methylpentanoate (2-isopropylmalate). The polypeptide is 2-isopropylmalate synthase (Xylella fastidiosa (strain M23)).